Reading from the N-terminus, the 282-residue chain is Acetylglutamate kinase (282 aa).

Residues 62-63 (GG), Arg-84, and Asn-178 contribute to the substrate site. Residues Lys-196, Ser-214, and 266–269 (EIFS) each bind L-arginine.

Homohexamer.

It localises to the cytoplasm. The enzyme catalyses N-acetyl-L-glutamate + ATP = N-acetyl-L-glutamyl 5-phosphate + ADP. It functions in the pathway amino-acid biosynthesis; L-arginine biosynthesis; N(2)-acetyl-L-ornithine from L-glutamate: step 2/4. Its activity is regulated as follows. Allosterically inhibited by arginine. Functionally, catalyzes the ATP-dependent phosphorylation of N-acetyl-L-glutamate. This chain is Acetylglutamate kinase, found in Thermotoga maritima (strain ATCC 43589 / DSM 3109 / JCM 10099 / NBRC 100826 / MSB8).